The following is a 215-amino-acid chain: Peroxiredoxin-5, mitochondrial (215 aa).

Residues 1–53 constitute a mitochondrion transit peptide; the sequence is MGLAGVCVLRRSAGYILGGAARQSVAATAAARRRSEGGWASGGVRSFSRAAAA. The Thioredoxin domain maps to 57–215; sequence IKVGDAIPAV…SLAPSIISQL (159 aa). N6-acetyllysine is present on K76. N6-acetyllysine; alternate is present on K84. K84 carries the post-translational modification N6-succinyllysine; alternate. Residue C101 is the Cysteine sulfenic acid (-SOH) intermediate of the active site. A lipid anchor (S-palmitoyl cysteine) is attached at C101. C101 and C205 are oxidised to a cystine. Residue K117 is modified to N6-succinyllysine. A phosphoserine mark is found at S172 and S183. The Microbody targeting signal signature appears at 213–215; it reads SQL.

Belongs to the peroxiredoxin family. Prx5 subfamily. As to quaternary structure, monomer. Post-translationally, S-palmitoylated. Palmitoylation occurs on the active site, inhibiting its reactivity; therefore PRDX5 palmitoylation status determines its antioxidant capacity. S-palmitoylated. Depalmitoylated by ABHD10.

The protein localises to the mitochondrion. It localises to the cytoplasm. The protein resides in the peroxisome matrix. The enzyme catalyses a hydroperoxide + [thioredoxin]-dithiol = an alcohol + [thioredoxin]-disulfide + H2O. In terms of biological role, thiol-specific peroxidase that catalyzes the reduction of hydrogen peroxide and organic hydroperoxides to water and alcohols, respectively. Plays a role in cell protection against oxidative stress by detoxifying peroxides and as sensor of hydrogen peroxide-mediated signaling events. This chain is Peroxiredoxin-5, mitochondrial (PRDX5), found in Chlorocebus aethiops (Green monkey).